Consider the following 144-residue polypeptide: D-aminoacyl-tRNA deacylase (144 aa).

The short motif at 136–137 is the Gly-cisPro motif, important for rejection of L-amino acids element; sequence GP.

It belongs to the DTD family. As to quaternary structure, homodimer.

It localises to the cytoplasm. The enzyme catalyses glycyl-tRNA(Ala) + H2O = tRNA(Ala) + glycine + H(+). It catalyses the reaction a D-aminoacyl-tRNA + H2O = a tRNA + a D-alpha-amino acid + H(+). In terms of biological role, an aminoacyl-tRNA editing enzyme that deacylates mischarged D-aminoacyl-tRNAs. Also deacylates mischarged glycyl-tRNA(Ala), protecting cells against glycine mischarging by AlaRS. Acts via tRNA-based rather than protein-based catalysis; rejects L-amino acids rather than detecting D-amino acids in the active site. By recycling D-aminoacyl-tRNA to D-amino acids and free tRNA molecules, this enzyme counteracts the toxicity associated with the formation of D-aminoacyl-tRNA entities in vivo and helps enforce protein L-homochirality. The polypeptide is D-aminoacyl-tRNA deacylase (Actinobacillus pleuropneumoniae serotype 5b (strain L20)).